An 822-amino-acid polypeptide reads, in one-letter code: Dimethyl sulfoxide/trimethylamine N-oxide reductase (822 aa).

Positions 1-42 form a signal peptide, tat-type signal; it reads MTKLSGQELHAELSRRAFLSYTAAVGALGLCGTSLLAQGARA. Mo-bis(molybdopterin guanine dinucleotide) contacts are provided by residues tryptophan 158, 158–160, serine 189, 232–233, 262–263, 283–285, 364–365, arginine 368, asparagine 476, histidine 480, 500–501, arginine 523, aspartate 553, 683–686, arginine 689, 691–693, asparagine 779, and 796–797; these read WKS, KT, IN, QTD, WS, QD, ASHP, HSQ, and GQ.

This sequence belongs to the prokaryotic molybdopterin-containing oxidoreductase family. Homodimer. The cofactor is Mo-bis(molybdopterin guanine dinucleotide). Predicted to be exported by the Tat system. The position of the signal peptide cleavage has been experimentally proven.

It localises to the periplasm. The enzyme catalyses dimethyl sulfide + a menaquinone + H2O = dimethyl sulfoxide + a menaquinol. It catalyses the reaction trimethylamine + 2 Fe(III)-[cytochrome c] + H2O = trimethylamine N-oxide + 2 Fe(II)-[cytochrome c] + 3 H(+). Functionally, catalyzes the reduction of dimethyl sulfoxide (DMSO) and trimethylamine N-oxide (TMAO) to dimethyl sulfide (DMS) and trimethylamine, respectively. The terminal DMSO reductase can also use various sulfoxides and N-oxide compounds as terminal electron acceptor in addition to DMSO and TMAO. The polypeptide is Dimethyl sulfoxide/trimethylamine N-oxide reductase (dmsA) (Cereibacter sphaeroides (Rhodobacter sphaeroides)).